Consider the following 146-residue polypeptide: uncharacterized protein (146 aa).

Residues 7–27 (FVLSITIVLVILIIIAFIWYN) traverse the membrane as a helical segment.

This sequence belongs to the asfivirus E146L family.

The protein resides in the host membrane. The protein localises to the virion. This is an uncharacterized protein from Ornithodoros (relapsing fever ticks).